The following is a 507-amino-acid chain: Maturase K (507 aa).

Belongs to the intron maturase 2 family. MatK subfamily.

Its subcellular location is the plastid. It localises to the chloroplast. Functionally, usually encoded in the trnK tRNA gene intron. Probably assists in splicing its own and other chloroplast group II introns. This chain is Maturase K, found in Lyonia ligustrina (Maleberry).